The sequence spans 285 residues: Cyclin-Y-like protein 1B (285 aa).

The Cyclin N-terminal domain occupies 111–209 (PKRNCIFRHF…CFLELLEFNI (99 aa)).

Belongs to the cyclin family. Cyclin Y subfamily.

The polypeptide is Cyclin-Y-like protein 1B (Homo sapiens (Human)).